We begin with the raw amino-acid sequence, 473 residues long: Vasculin (473 aa).

5 disordered regions span residues 1–26 (MAQHDFAPAWLNFPTPPSSTKSSLNF), 44–163 (RRRH…EYPP), 196–240 (SQPV…SFPH), 258–286 (NFSPSTTSVKECNRSNSSSPVDKLNQQPR), and 305–342 (LKRDRVEEEHEDESHVGSEKDDDSFNLHNSNSTHQERD). At Ser49 the chain carries Phosphoserine. At Arg87 the chain carries Omega-N-methylarginine. The segment covering 93 to 107 (GSSRSRSSIFHSGKS) has biased composition (low complexity). Basic and acidic residues predominate over residues 119–133 (ETGRKDDKRERKQFE). A phosphoserine mark is found at Ser274, Ser276, Ser322, and Ser381. Residues 305 to 329 (LKRDRVEEEHEDESHVGSEKDDDSF) are compositionally biased toward basic and acidic residues. The disordered stretch occupies residues 444 to 473 (GPWKNSTFKPTIENDDTETSSSDTSDDDDV). A compositionally biased stretch (acidic residues) spans 456-473 (ENDDTETSSSDTSDDDDV).

The protein belongs to the vasculin family. As to quaternary structure, interacts with GTF2B, GTF2F2, RNA polymerase II and TBP.

It is found in the nucleus. Functionally, functions as a GC-rich promoter-specific transactivating transcription factor. The sequence is that of Vasculin (GPBP1) from Bos taurus (Bovine).